Consider the following 326-residue polypeptide: Polycomb complex protein BMI-1-A (326 aa).

The RING-type zinc-finger motif lies at 18 to 57 (CVLCGGYFIDATTIIECLHSFCKTCIVRYLETSKYCPICD). The Nuclear localization signal motif lies at 81 to 95 (KLVPGLFKGEMKRRR). 2 disordered regions span residues 239–262 (NPHTDRINHTSGDMESDSGSDKAG) and 274–326 (CIPS…ISSG). Residues 290-303 (ISSTINGTSSSSSS) are compositionally biased toward low complexity.

As to quaternary structure, component of a PRC1-like complex. Interacts with cbx4.

It is found in the nucleus. Component of a Polycomb group (PcG) multiprotein PRC1-like complex, a complex class required to maintain the transcriptionally repressive state of many genes, including Hox genes, throughout development. PcG PRC1 complex acts via chromatin remodeling and modification of histones; it mediates monoubiquitination of histone H2A 'Lys-119', rendering chromatin heritably changed in its expressibility. In the PRC1 complex, it is required to stimulate the E3 ubiquitin-protein ligase activity of rnf2. The protein is Polycomb complex protein BMI-1-A (bmi1a) of Xenopus laevis (African clawed frog).